The primary structure comprises 293 residues: Pantothenate synthetase (293 aa).

Residue 30 to 37 (MGYLHKGH) coordinates ATP. Residue H37 is the Proton donor of the active site. Q61 lines the (R)-pantoate pocket. A beta-alanine-binding site is contributed by Q61. 147–150 (GEKD) lines the ATP pocket. (R)-pantoate is bound at residue Q153. Residues V176 and 184–187 (CSSR) contribute to the ATP site.

Belongs to the pantothenate synthetase family. As to quaternary structure, homodimer.

It localises to the cytoplasm. It catalyses the reaction (R)-pantoate + beta-alanine + ATP = (R)-pantothenate + AMP + diphosphate + H(+). It functions in the pathway cofactor biosynthesis; (R)-pantothenate biosynthesis; (R)-pantothenate from (R)-pantoate and beta-alanine: step 1/1. Its function is as follows. Catalyzes the condensation of pantoate with beta-alanine in an ATP-dependent reaction via a pantoyl-adenylate intermediate. The polypeptide is Pantothenate synthetase (Brucella melitensis biotype 2 (strain ATCC 23457)).